The sequence spans 477 residues: 3-isopropylmalate dehydratase large subunit (477 aa).

3 residues coordinate [4Fe-4S] cluster: cysteine 352, cysteine 413, and cysteine 416.

The protein belongs to the aconitase/IPM isomerase family. LeuC type 1 subfamily. As to quaternary structure, heterodimer of LeuC and LeuD. [4Fe-4S] cluster is required as a cofactor.

The enzyme catalyses (2R,3S)-3-isopropylmalate = (2S)-2-isopropylmalate. The protein operates within amino-acid biosynthesis; L-leucine biosynthesis; L-leucine from 3-methyl-2-oxobutanoate: step 2/4. In terms of biological role, catalyzes the isomerization between 2-isopropylmalate and 3-isopropylmalate, via the formation of 2-isopropylmaleate. The polypeptide is 3-isopropylmalate dehydratase large subunit (Pseudomonas putida (strain GB-1)).